The following is a 302-amino-acid chain: Gigasin-6 (302 aa).

An N-terminal signal peptide occupies residues 1-22 (MSSRNLLYSSVVLFLVLFYCHG). Residues 75–95 (ITTDTLFGLGGISALFANILI) traverse the membrane as a helical segment.

As to expression, component of the organic matrix of calcified shell layers.

The protein resides in the membrane. The chain is Gigasin-6 from Magallana gigas (Pacific oyster).